A 349-amino-acid polypeptide reads, in one-letter code: Putative nuclease HARBI1 (349 aa).

The region spanning 148 to 300 is the DDE Tnp4 domain; that stretch reads VDCIHVAIKA…IILACCVLHN (153 aa). Residues D149, D199, D225, and E261 each contribute to the a divalent metal cation site.

It belongs to the HARBI1 family. Interacts with NAIF1. Requires a divalent metal cation as cofactor. Detected in brain, eye, nerve tissue, kidney and lung.

It is found in the nucleus. It localises to the cytoplasm. In terms of biological role, transposase-derived protein that may have nuclease activity (Potential). Does not have transposase activity. This Homo sapiens (Human) protein is Putative nuclease HARBI1 (HARBI1).